A 444-amino-acid polypeptide reads, in one-letter code: Trigger factor (444 aa).

A PPIase FKBP-type domain is found at 160 to 245; the sequence is DMQVTFDFEG…VKQVEKPKLP (86 aa).

The protein belongs to the FKBP-type PPIase family. Tig subfamily.

It localises to the cytoplasm. The enzyme catalyses [protein]-peptidylproline (omega=180) = [protein]-peptidylproline (omega=0). Functionally, involved in protein export. Acts as a chaperone by maintaining the newly synthesized protein in an open conformation. Functions as a peptidyl-prolyl cis-trans isomerase. The sequence is that of Trigger factor from Acinetobacter baumannii (strain SDF).